The chain runs to 78 residues: Acyl carrier protein (78 aa).

Residues 1–76 (MALFEDIQAV…DVVKYIEDNK (76 aa)) form the Carrier domain. Ser-36 carries the O-(pantetheine 4'-phosphoryl)serine modification.

The protein belongs to the acyl carrier protein (ACP) family. In terms of processing, 4'-phosphopantetheine is transferred from CoA to a specific serine of apo-ACP by AcpS. This modification is essential for activity because fatty acids are bound in thioester linkage to the sulfhydryl of the prosthetic group.

It is found in the cytoplasm. It participates in lipid metabolism; fatty acid biosynthesis. In terms of biological role, carrier of the growing fatty acid chain in fatty acid biosynthesis. This Helicobacter pylori (strain G27) protein is Acyl carrier protein.